A 309-amino-acid polypeptide reads, in one-letter code: Olfactory receptor 5AC2 (309 aa).

Over 1 to 27 (MDISEGNKTLVTEFVLTGLTDRPWLHV) the chain is Extracellular. N7 is a glycosylation site (N-linked (GlcNAc...) asparagine). A helical transmembrane segment spans residues 28 to 48 (LFFVVFLVVYLITMVGNLGLI). Residues 49 to 56 (VLIWNDPH) are Cytoplasmic-facing. Residues 57–77 (LHMPMYLFLGGLAFSDACTST) form a helical membrane-spanning segment. At 78–101 (SITPRMLVNFLDKTAMISLAECIT) the chain is on the extracellular side. An intrachain disulfide couples C99 to C191. The chain crosses the membrane as a helical span at residues 102–122 (QFYFFASSATTECFLLVMMAY). Residues 123–135 (DRYVAICNPLLYP) are Cytoplasmic-facing. A helical membrane pass occupies residues 136 to 156 (VMMSNKLSAQLLSISYVIGFL). At 157 to 198 (HPLVHVSLLLRLTFCRFNIIHYFYCEILQLFKISCNGPSINA) the chain is on the extracellular side. The chain crosses the membrane as a helical span at residues 199–219 (LMIFIFGAFIQIPTLMTIIIS). Residues 220 to 239 (YTRVLFDILKKKSEKGRSKA) lie on the Cytoplasmic side of the membrane. Residues 240–260 (FSTCGAHLLSVSLYYGTLIFM) form a helical membrane-spanning segment. Residues 261–273 (YVRPASGLAEDQD) are Extracellular-facing. The chain crosses the membrane as a helical span at residues 274-294 (KVYSLFYTIIIPLLNPFIYSL). Topologically, residues 295–309 (RNKKVMHALRRVIRK) are cytoplasmic.

It belongs to the G-protein coupled receptor 1 family.

It is found in the cell membrane. Odorant receptor. In Homo sapiens (Human), this protein is Olfactory receptor 5AC2 (OR5AC2).